Reading from the N-terminus, the 125-residue chain is Splicing factor 3B subunit 6 (125 aa).

Residues E16–K29 are interaction with pre-mRNA branch site. The region spanning R19–A94 is the RRM domain. K29 is modified (N6-acetyllysine; alternate). K29 is covalently cross-linked (Glycyl lysine isopeptide (Lys-Gly) (interchain with G-Cter in SUMO2); alternate). The residue at position 41 (K41) is an N6-acetyllysine.

As to quaternary structure, component of the 17S U2 SnRNP complex, a ribonucleoprotein complex that contains small nuclear RNA (snRNA) U2 and a number of specific proteins. Part of the SF3B subcomplex of the 17S U2 SnRNP complex. SF3B associates with the splicing subcomplex SF3A and a 12S RNA unit to form the U2 small nuclear ribonucleoproteins complex (U2 snRNP). Within the SF3B complex interacts directly with SF3B1. Component of the minor spliceosome, which splices U12-type introns.

The protein resides in the nucleus. Its function is as follows. Component of the 17S U2 SnRNP complex of the spliceosome, a large ribonucleoprotein complex that removes introns from transcribed pre-mRNAs. The 17S U2 SnRNP complex (1) directly participates in early spliceosome assembly and (2) mediates recognition of the intron branch site during pre-mRNA splicing by promoting the selection of the pre-mRNA branch-site adenosine, the nucleophile for the first step of splicing. Within the 17S U2 SnRNP complex, SF3B6 is part of the SF3B subcomplex, which is required for 'A' complex assembly formed by the stable binding of U2 snRNP to the branchpoint sequence in pre-mRNA. Sequence independent binding of SF3A and SF3B subcomplexes upstream of the branch site is essential, it may anchor U2 snRNP to the pre-mRNA. Within the 17S U2 SnRNP complex, SF3B6 directly contacts the pre-mRNA branch site adenosine for the first catalytic step of splicing. SF3B6 stabilizes the intron branch site-U2 snRNA duplex, thereby promoting-binding of introns with poor sequence complementarity. Also acts as a component of the minor spliceosome, which is involved in the splicing of U12-type introns in pre-mRNAs. This is Splicing factor 3B subunit 6 (Sf3b6) from Mus musculus (Mouse).